A 347-amino-acid polypeptide reads, in one-letter code: NADH-ubiquinone oxidoreductase chain 2 (347 aa).

10 helical membrane passes run 3 to 23, 25 to 45, 66 to 86, 111 to 131, 149 to 169, 178 to 198, 201 to 221, 237 to 257, 274 to 294, and 325 to 345; these read PPILIIIMATIMTGTMIVMLS, HWLLIWIGFEMNMLAIIPILM, ASMLLMMGVTINLLYSGQWVI, FHFWVPEVTQGITLMSGMILL, INTNLLMLMALTSVLVGGWGG, IMAYSSIAHMGWMAAIITYNP, MVLNLTLYILMTLSTFMLFML, FPLITSMILILMLSLGGLPPL, NMIIIPTLMAITALLNLYFYL, and LLPPLIITSTMLLPLTPMLSV.

It belongs to the complex I subunit 2 family. Core subunit of respiratory chain NADH dehydrogenase (Complex I) which is composed of 45 different subunits. Interacts with TMEM242.

Its subcellular location is the mitochondrion inner membrane. It carries out the reaction a ubiquinone + NADH + 5 H(+)(in) = a ubiquinol + NAD(+) + 4 H(+)(out). Its function is as follows. Core subunit of the mitochondrial membrane respiratory chain NADH dehydrogenase (Complex I) which catalyzes electron transfer from NADH through the respiratory chain, using ubiquinone as an electron acceptor. Essential for the catalytic activity and assembly of complex I. The chain is NADH-ubiquinone oxidoreductase chain 2 from Canis lupus familiaris (Dog).